Reading from the N-terminus, the 312-residue chain is D-alanine--D-alanine ligase (312 aa).

Residues Lys-108–Ser-308 form the ATP-grasp domain. Val-138–Tyr-193 contributes to the ATP binding site. Mg(2+) contacts are provided by Asp-262, Glu-275, and Asn-277.

Belongs to the D-alanine--D-alanine ligase family. Requires Mg(2+) as cofactor. It depends on Mn(2+) as a cofactor.

It is found in the cytoplasm. It catalyses the reaction 2 D-alanine + ATP = D-alanyl-D-alanine + ADP + phosphate + H(+). It participates in cell wall biogenesis; peptidoglycan biosynthesis. Functionally, cell wall formation. The chain is D-alanine--D-alanine ligase from Burkholderia thailandensis (strain ATCC 700388 / DSM 13276 / CCUG 48851 / CIP 106301 / E264).